A 292-amino-acid chain; its full sequence is Ribosomal protein L11 methyltransferase (292 aa).

Positions 143, 164, 186, and 228 each coordinate S-adenosyl-L-methionine.

The protein belongs to the methyltransferase superfamily. PrmA family.

It is found in the cytoplasm. It catalyses the reaction L-lysyl-[protein] + 3 S-adenosyl-L-methionine = N(6),N(6),N(6)-trimethyl-L-lysyl-[protein] + 3 S-adenosyl-L-homocysteine + 3 H(+). Methylates ribosomal protein L11. This chain is Ribosomal protein L11 methyltransferase, found in Tolumonas auensis (strain DSM 9187 / NBRC 110442 / TA 4).